Here is a 192-residue protein sequence, read N- to C-terminus: U1 small nuclear ribonucleoprotein C (192 aa).

The segment at 4 to 36 (YYCEYCDIYLTHSSPVGRRQHNQGRKHISAKIE) adopts a Matrin-type zinc-finger fold. Positions 118 to 192 (PGANKYPNNN…FVNKNSEQPN (75 aa)) are disordered. The span at 133–154 (RISNTPKPYNNYTNKPITNSPY) shows a compositional bias: polar residues. Positions 164–173 (NNENSNNFSN) are enriched in low complexity. The segment covering 174–192 (YQMNKDNSNFVNKNSEQPN) has biased composition (polar residues).

This sequence belongs to the U1 small nuclear ribonucleoprotein C family. As to quaternary structure, U1 snRNP is composed of the 7 core Sm proteins B/B', D1, D2, D3, E, F and G that assemble in a heptameric protein ring on the Sm site of the small nuclear RNA to form the core snRNP, and at least 3 U1 snRNP-specific proteins U1-70K, U1-A and U1-C. U1-C interacts with U1 snRNA and the 5' splice-site region of the pre-mRNA.

The protein localises to the nucleus. Its function is as follows. Component of the spliceosomal U1 snRNP, which is essential for recognition of the pre-mRNA 5' splice-site and the subsequent assembly of the spliceosome. U1-C is directly involved in initial 5' splice-site recognition for both constitutive and regulated alternative splicing. The interaction with the 5' splice-site seems to precede base-pairing between the pre-mRNA and the U1 snRNA. Stimulates commitment or early (E) complex formation by stabilizing the base pairing of the 5' end of the U1 snRNA and the 5' splice-site region. The polypeptide is U1 small nuclear ribonucleoprotein C (Plasmodium chabaudi chabaudi).